The primary structure comprises 301 residues: Probable alpha-L-glutamate ligase (301 aa).

The region spanning 104-287 is the ATP-grasp domain; it reads LQLLSRKGIG…VAGMIYEFIE (184 aa). Residues Lys-141, 178–179, Asp-187, and 211–213 each bind ATP; these read EF and RSN. Asp-248, Glu-260, and Asn-262 together coordinate Mg(2+). The Mn(2+) site is built by Asp-248, Glu-260, and Asn-262.

It belongs to the RimK family. It depends on Mg(2+) as a cofactor. Mn(2+) serves as cofactor.

This Vibrio vulnificus (strain CMCP6) protein is Probable alpha-L-glutamate ligase.